Here is a 254-residue protein sequence, read N- to C-terminus: Aspartate/glutamate leucyltransferase (254 aa).

This sequence belongs to the R-transferase family. Bpt subfamily.

The protein localises to the cytoplasm. The catalysed reaction is N-terminal L-glutamyl-[protein] + L-leucyl-tRNA(Leu) = N-terminal L-leucyl-L-glutamyl-[protein] + tRNA(Leu) + H(+). It catalyses the reaction N-terminal L-aspartyl-[protein] + L-leucyl-tRNA(Leu) = N-terminal L-leucyl-L-aspartyl-[protein] + tRNA(Leu) + H(+). In terms of biological role, functions in the N-end rule pathway of protein degradation where it conjugates Leu from its aminoacyl-tRNA to the N-termini of proteins containing an N-terminal aspartate or glutamate. The chain is Aspartate/glutamate leucyltransferase from Mesorhizobium japonicum (strain LMG 29417 / CECT 9101 / MAFF 303099) (Mesorhizobium loti (strain MAFF 303099)).